We begin with the raw amino-acid sequence, 252 residues long: Type III pantothenate kinase (252 aa).

ATP is bound at residue 6-13 (DIGNTNTV). 105–108 (GADR) is a binding site for substrate. D107 functions as the Proton acceptor in the catalytic mechanism. Position 127 (D127) interacts with K(+). T130 is an ATP binding site. A substrate-binding site is contributed by T182.

The protein belongs to the type III pantothenate kinase family. Homodimer. Requires NH4(+) as cofactor. K(+) is required as a cofactor.

The protein localises to the cytoplasm. It catalyses the reaction (R)-pantothenate + ATP = (R)-4'-phosphopantothenate + ADP + H(+). The protein operates within cofactor biosynthesis; coenzyme A biosynthesis; CoA from (R)-pantothenate: step 1/5. Its function is as follows. Catalyzes the phosphorylation of pantothenate (Pan), the first step in CoA biosynthesis. The protein is Type III pantothenate kinase of Salinispora arenicola (strain CNS-205).